Here is a 503-residue protein sequence, read N- to C-terminus: Probable protein kinase UbiB (503 aa).

The helical transmembrane segment at threonine 13–leucine 35 threads the bilayer. Residues glutamate 120 to valine 491 enclose the Protein kinase domain. ATP-binding positions include isoleucine 126–valine 134 and lysine 148. Aspartate 283 serves as the catalytic Proton acceptor. A helical membrane pass occupies residues glutamine 485 to leucine 502.

This sequence belongs to the ABC1 family. UbiB subfamily.

It is found in the cell inner membrane. Its pathway is cofactor biosynthesis; ubiquinone biosynthesis [regulation]. In terms of biological role, is probably a protein kinase regulator of UbiI activity which is involved in aerobic coenzyme Q (ubiquinone) biosynthesis. The protein is Probable protein kinase UbiB of Neisseria meningitidis serogroup B (strain ATCC BAA-335 / MC58).